A 70-amino-acid chain; its full sequence is ATP synthase subunit c (70 aa).

Transmembrane regions (helical) follow at residues 3–23 (ALAA…IGIA) and 44–64 (LFFI…VIAI).

The protein belongs to the ATPase C chain family. As to quaternary structure, F-type ATPases have 2 components, F(1) - the catalytic core - and F(0) - the membrane proton channel. F(1) has five subunits: alpha(3), beta(3), gamma(1), delta(1), epsilon(1). F(0) has three main subunits: a(1), b(2) and c(10-14). The alpha and beta chains form an alternating ring which encloses part of the gamma chain. F(1) is attached to F(0) by a central stalk formed by the gamma and epsilon chains, while a peripheral stalk is formed by the delta and b chains.

It localises to the cell membrane. Functionally, f(1)F(0) ATP synthase produces ATP from ADP in the presence of a proton or sodium gradient. F-type ATPases consist of two structural domains, F(1) containing the extramembraneous catalytic core and F(0) containing the membrane proton channel, linked together by a central stalk and a peripheral stalk. During catalysis, ATP synthesis in the catalytic domain of F(1) is coupled via a rotary mechanism of the central stalk subunits to proton translocation. Key component of the F(0) channel; it plays a direct role in translocation across the membrane. A homomeric c-ring of between 10-14 subunits forms the central stalk rotor element with the F(1) delta and epsilon subunits. The sequence is that of ATP synthase subunit c from Caldicellulosiruptor saccharolyticus (strain ATCC 43494 / DSM 8903 / Tp8T 6331).